A 215-amino-acid polypeptide reads, in one-letter code: MSNNSRHYSAIDEAILQGQAMLETLFGKPVAQRENPAKGLSQPALTSAEKKQSIGFMRVNHSGEVCAQALYHGQMATAKNPAVRALFTTAAKEETDHLAWCQERLEELGGHTSYLNAFWYTNSFLIGLLAGLSGDPLSLGFVEETEKQVEIHLADHLRKIPSNDLKSRKIVEYMQQDEIQHGLNARSSGAKELPYLVKKLMAFQAKVMTTLAYWI.

Residues Glu64, Glu94, His97, Glu146, Glu178, and His181 each coordinate Fe cation.

It belongs to the COQ7 family. Fe cation is required as a cofactor.

It localises to the cell membrane. The enzyme catalyses a 5-methoxy-2-methyl-3-(all-trans-polyprenyl)benzene-1,4-diol + AH2 + O2 = a 3-demethylubiquinol + A + H2O. It functions in the pathway cofactor biosynthesis; ubiquinone biosynthesis. Its function is as follows. Catalyzes the hydroxylation of 2-nonaprenyl-3-methyl-6-methoxy-1,4-benzoquinol during ubiquinone biosynthesis. The polypeptide is 3-demethoxyubiquinol 3-hydroxylase (Coxiella burnetii (strain RSA 331 / Henzerling II)).